The primary structure comprises 594 residues: CDPK-related kinase 4 (594 aa).

Residues 1 to 131 (MGHCYSRNIS…DSGGGERLDK (131 aa)) form a disordered region. A lipid anchor (N-myristoyl glycine) is attached at glycine 2. Positions 37-58 (IPQSPVASGTPEVNSYNISPFQ) are enriched in polar residues. Residues 116 to 131 (VVDHGGDSGGGERLDK) are compositionally biased toward basic and acidic residues. The region spanning 143-405 (YELGKEVGRG…AAQALAHPWL (263 aa)) is the Protein kinase domain. ATP contacts are provided by residues 149–157 (VGRGHFGHT) and lysine 175. Aspartate 271 functions as the Proton acceptor in the catalytic mechanism. A Phosphoserine modification is found at serine 311. The tract at residues 409-439 (NPGLLLDFSVYKLVKSYIRASPFRRSALKAL) is autoinhibitory domain. The calmodulin binding (CaMBD) stretch occupies residues 428–448 (ASPFRRSALKALSKAIPDEEL). 4 EF-hand domains span residues 446-481 (EELVFLKAQFMLLDPKDGGLSLNCFTMALTRYATDA), 482-517 (MMESRLPDILNTMQPLAQKKLDFEEFCAAAVSVYQL), 518-557 (EALEEWEQIATSAFEHFEHEGNRIISVQELAGEMSVGPSA), and 558-587 (YPLLKDWIRSSDGKLSFLGYAKFLHGVTVR). Residues aspartate 462, lysine 501, glutamate 506, asparagine 539, glutamate 546, serine 567, aspartate 569, and lysine 571 each contribute to the Ca(2+) site. Residue serine 573 is modified to Phosphoserine.

The protein belongs to the protein kinase superfamily. Ser/Thr protein kinase family. CDPK subfamily. As to quaternary structure, binds calmodulin (CaM) in a calcium-dependent manner. In terms of processing, autophosphorylated.

It is found in the cell membrane. It carries out the reaction L-seryl-[protein] + ATP = O-phospho-L-seryl-[protein] + ADP + H(+). It catalyses the reaction L-threonyl-[protein] + ATP = O-phospho-L-threonyl-[protein] + ADP + H(+). Its activity is regulated as follows. Activated by calcium and calmodulin. Autophosphorylation may play an important role in the regulation of the kinase activity. In terms of biological role, may play a role in signal transduction pathways that involve calcium as a second messenger. This chain is CDPK-related kinase 4 (CRK4), found in Arabidopsis thaliana (Mouse-ear cress).